Here is a 95-residue protein sequence, read N- to C-terminus: Aspartyl/glutamyl-tRNA(Asn/Gln) amidotransferase subunit C (95 aa).

Belongs to the GatC family. As to quaternary structure, heterotrimer of A, B and C subunits.

It carries out the reaction L-glutamyl-tRNA(Gln) + L-glutamine + ATP + H2O = L-glutaminyl-tRNA(Gln) + L-glutamate + ADP + phosphate + H(+). It catalyses the reaction L-aspartyl-tRNA(Asn) + L-glutamine + ATP + H2O = L-asparaginyl-tRNA(Asn) + L-glutamate + ADP + phosphate + 2 H(+). Allows the formation of correctly charged Asn-tRNA(Asn) or Gln-tRNA(Gln) through the transamidation of misacylated Asp-tRNA(Asn) or Glu-tRNA(Gln) in organisms which lack either or both of asparaginyl-tRNA or glutaminyl-tRNA synthetases. The reaction takes place in the presence of glutamine and ATP through an activated phospho-Asp-tRNA(Asn) or phospho-Glu-tRNA(Gln). The chain is Aspartyl/glutamyl-tRNA(Asn/Gln) amidotransferase subunit C from Ruthia magnifica subsp. Calyptogena magnifica.